A 283-amino-acid polypeptide reads, in one-letter code: Putative F-box protein At1g60370 (283 aa).

One can recognise an F-box domain in the interval 4–53 (GEKLESIPIDLIIEIHSRLPAESVARFRCVSKLWGSMFRRPYFTELFLTR).

The protein is Putative F-box protein At1g60370 of Arabidopsis thaliana (Mouse-ear cress).